The following is a 956-amino-acid chain: DNA replication helicase (956 aa).

120–127 (GTAGAGKT) contacts ATP. The disordered stretch occupies residues 658–694 (PINNHVDADSSQGGQSVPVSQRMEHGQEETHDIPCLS). Over residues 667–678 (SSQGGQSVPVSQ) the composition is skewed to low complexity. The segment covering 679-694 (RMEHGQEETHDIPCLS) has biased composition (basic and acidic residues).

Belongs to the herpesviridae helicase family. As to quaternary structure, associates with the primase and the primase-associated factor to form the helicase-primase complex.

It is found in the host nucleus. In terms of biological role, component of the helicase/primase complex. Unwinds the DNA at the replication forks and generates single-stranded DNA for both leading and lagging strand synthesis. The primase synthesizes short RNA primers on the lagging strand that the polymerase elongates using dNTPs. Possesses helicase-like motifs and therefore may act as the helicase subunit of the complex. This is DNA replication helicase from Human cytomegalovirus (strain AD169) (HHV-5).